Here is a 225-residue protein sequence, read N- to C-terminus: Imidazoleglycerol-phosphate dehydratase (225 aa).

It belongs to the imidazoleglycerol-phosphate dehydratase family.

It catalyses the reaction D-erythro-1-(imidazol-4-yl)glycerol 3-phosphate = 3-(imidazol-4-yl)-2-oxopropyl phosphate + H2O. The protein operates within amino-acid biosynthesis; L-histidine biosynthesis; L-histidine from 5-phospho-alpha-D-ribose 1-diphosphate: step 6/9. This chain is Imidazoleglycerol-phosphate dehydratase (PTH3), found in Pyricularia oryzae (strain 70-15 / ATCC MYA-4617 / FGSC 8958) (Rice blast fungus).